The primary structure comprises 145 residues: Putative phosphatidylglycerol/phosphatidylinositol transfer protein DDB_G0282179 (145 aa).

The signal sequence occupies residues 1–20 (MIKTILLLLINFMLILIVNG). The N-linked (GlcNAc...) asparagine glycan is linked to Asn134.

It belongs to the NPC2 family. As to quaternary structure, monomer.

In terms of biological role, catalyzes the intermembrane transfer of phosphatidylglycerol and phosphatidylinositol. The polypeptide is Putative phosphatidylglycerol/phosphatidylinositol transfer protein DDB_G0282179 (Dictyostelium discoideum (Social amoeba)).